The following is a 536-amino-acid chain: DEAD-box ATP-dependent RNA helicase 26 (536 aa).

Residues 1 to 44 (MMSGGPSDATHRKRRRRRGPKGSGVDGPSIPRAVTTNGAGPEEE) form a disordered region. Residues 11–20 (HRKRRRRRGP) show a composition bias toward basic residues. The Q motif signature appears at 74-102 (TRFDQCPVSPLSLKAIKDAGYEKMTQVQE). Residues 105–282 (LPIILQGEDV…HIAMKRGYKF (178 aa)) form the Helicase ATP-binding domain. 118–125 (AKTGTGKT) contributes to the ATP binding site. Residues 230–233 (DEAD) carry the DEAD box motif. A Helicase C-terminal domain is found at 316–466 (VLKKHIAEDA…SIQTGVKDAL (151 aa)).

It belongs to the DEAD box helicase family.

The enzyme catalyses ATP + H2O = ADP + phosphate + H(+). The chain is DEAD-box ATP-dependent RNA helicase 26 from Oryza sativa subsp. japonica (Rice).